The sequence spans 132 residues: Agouti-signaling protein (132 aa).

A signal peptide spans 1–22; it reads MDVTRLLLATLLVFLCFFTAYS. Asn39 carries N-linked (GlcNAc...) asparagine glycosylation. Residues 61–87 are disordered; the sequence is QISRKEAEKKRSSKKEASMKKVARPRT. Basic and acidic residues predominate over residues 63 to 79; sequence SRKEAEKKRSSKKEASM. 5 cysteine pairs are disulfide-bonded: Cys93/Cys108, Cys100/Cys114, Cys107/Cys125, Cys111/Cys132, and Cys116/Cys123. The region spanning 93–132 is the Agouti domain; the sequence is CVTTRDSCKPPAPACCDPCASCQCRFFRSACSCRVLSLNC.

The protein localises to the secreted. In terms of biological role, involved in the regulation of melanogenesis. The binding of ASP to MC1R precludes alpha-MSH initiated signaling and thus blocks production of cAMP, leading to a down-regulation of eumelanogenesis (brown/black pigment) and thus increasing synthesis of pheomelanin (yellow/red pigment). The protein is Agouti-signaling protein (ASIP) of Macaca silenus (Lion-tailed macaque).